The following is a 397-amino-acid chain: Keratinocyte differentiation factor 1 (397 aa).

Residues 1–16 show a composition bias toward pro residues; sequence MPRPGQPRPSSGPPRL. Disordered regions lie at residues 1-67, 124-158, and 191-214; these read MPRP…SAEP, EAAW…MGSS, and PLAD…RGSE. Residues 44 to 55 are compositionally biased toward basic and acidic residues; the sequence is RPDPKDPGHHGP. Residues 201–211 are compositionally biased toward polar residues; sequence SLPSTFTSSPR. Ser218 bears the Phosphoserine mark. Disordered stretches follow at residues 304–339 and 361–392; these read ISTR…TMVG and ARKL…GAPL. The span at 321-330 shows a compositional bias: low complexity; sequence ARSTAPAAAP. Residues 375–388 are compositionally biased toward polar residues; the sequence is SQDSSFQGTDTDSS.

Its subcellular location is the cytoplasm. The protein resides in the cell junction. In terms of biological role, plays a role in the regulation of the epidermis formation during early development. Required both as an inhibitor of basal cell proliferation and a promoter of differentiation of basal progenitor cell progeny. The polypeptide is Keratinocyte differentiation factor 1 (Kdf1) (Rattus norvegicus (Rat)).